The sequence spans 540 residues: Glucose-6-phosphate isomerase (540 aa).

Residue E350 is the Proton donor of the active site. Residues H381 and K503 contribute to the active site.

It belongs to the GPI family.

It is found in the cytoplasm. The catalysed reaction is alpha-D-glucose 6-phosphate = beta-D-fructose 6-phosphate. Its pathway is carbohydrate biosynthesis; gluconeogenesis. It participates in carbohydrate degradation; glycolysis; D-glyceraldehyde 3-phosphate and glycerone phosphate from D-glucose: step 2/4. Functionally, catalyzes the reversible isomerization of glucose-6-phosphate to fructose-6-phosphate. The protein is Glucose-6-phosphate isomerase of Burkholderia cenocepacia (strain ATCC BAA-245 / DSM 16553 / LMG 16656 / NCTC 13227 / J2315 / CF5610) (Burkholderia cepacia (strain J2315)).